The following is a 294-amino-acid chain: Deubiquitinase OTUD6B (294 aa).

Position 1 is an N-acetylmethionine (Met1). Residues 148 to 285 form the OTU domain; that stretch reads LEIKQIPSDG…GEHYNSVTRL (138 aa). The tract at residues 153 to 159 is cys-loop; that stretch reads IPSDGHC. Asp156 is an active-site residue. Cys159 acts as the Nucleophile in catalysis. Residues 220 to 230 form a variable-loop region; sequence IVNTAAWGGQL. The interval 268–278 is his-loop; the sequence is YMRHAYGLGEH. The active site involves His278.

In terms of assembly, interacts with the eukaryotic translation initiation factor 4F complex. In terms of tissue distribution, ubiquitously expressed. Expression is observed in several organ systems including the cardiovascular, digestive, central and peripheral nervous and musculoskeletal systems.

It carries out the reaction Thiol-dependent hydrolysis of ester, thioester, amide, peptide and isopeptide bonds formed by the C-terminal Gly of ubiquitin (a 76-residue protein attached to proteins as an intracellular targeting signal).. In terms of biological role, deubiquitinating enzyme that may play a role in the ubiquitin-dependent regulation of protein synthesis, downstream of mTORC1. May associate with the protein synthesis initiation complex and modify its ubiquitination to repress translation. May also repress DNA synthesis and modify different cellular targets thereby regulating cell growth and proliferation. May also play a role in proteasome assembly and function. The sequence is that of Deubiquitinase OTUD6B from Mus musculus (Mouse).